We begin with the raw amino-acid sequence, 784 residues long: Replication protein A 70 kDa DNA-binding subunit E (784 aa).

The disordered stretch occupies residues 114-224 (HPVPGGKHND…NRGPVARNEA (111 aa)). 2 stretches are compositionally biased toward polar residues: residues 132–148 (KFNT…QVNN) and 167–190 (SSVP…NGVT). Residues 241-327 (WTIKARVTNK…RNDYEIMLDN (87 aa)) constitute a DNA-binding region (OB). The segment at 532–558 (CPIMNGDRPCSKKVTDNGDGTWRCEKC) adopts a C4-type zinc-finger fold. Disordered stretches follow at residues 678–707 (LPIN…PSSV) and 746–784 (AKCP…VGSY). Over residues 695 to 707 (GIGSSGTRDPSSV) the composition is skewed to polar residues. The segment covering 760–776 (YMGGSYRGTTGSYGGGL) has biased composition (gly residues).

This sequence belongs to the replication factor A protein 1 family. In terms of assembly, heterotrimer of RPA1, RPA2 and RPA3 (canonical replication protein A complex).

It localises to the nucleus. Its function is as follows. Component of the replication protein A complex (RPA) required for DNA recombination, repair and replication. The activity of RPA is mediated by single-stranded DNA binding and protein interactions. Probably involved in repair of double-strand DNA breaks (DSBs) induced by genotoxic stresses. The protein is Replication protein A 70 kDa DNA-binding subunit E (RPA1E) of Arabidopsis thaliana (Mouse-ear cress).